Reading from the N-terminus, the 665-residue chain is GTPase IMAP family member 8 (665 aa).

Residues 8–210 enclose the AIG1-type G 1 domain; that stretch reads MSELRLLLLG…HVNFKTEGSR (203 aa). The segment at 17 to 24 is G1; the sequence is GKCRSGKS. GTP is bound by residues 17–25 and Ser-38; that span reads GKCRSGKSA. The tract at residues 44–48 is G2; it reads TVIKM. Residues 65-68 form a G3 region; sequence DTPD. The tract at residues 134 to 137 is G4; it reads TRKD. GTP contacts are provided by residues 135-137 and Asn-170; that span reads RKD. Positions 169–171 are G5; the sequence is NNK. Residues 217-246 form a disordered region; it reads EAASQEGDKPQGPRERQLQSTGPEQNPGTS. A compositionally biased stretch (basic and acidic residues) spans 222 to 233; that stretch reads EGDKPQGPRERQ. The segment covering 234-246 has biased composition (polar residues); that stretch reads LQSTGPEQNPGTS. AIG1-type G domains lie at 245–435 and 436–644; these read TSEL…VFRE and KETL…SKLI. 2 coiled-coil regions span residues 400 to 427 and 608 to 657; these read NYRA…HQNG and QAQE…EKLL.

Belongs to the TRAFAC class TrmE-Era-EngA-EngB-Septin-like GTPase superfamily. AIG1/Toc34/Toc159-like paraseptin GTPase family. IAN subfamily. In terms of tissue distribution, expressed in the spleen, intestine, liver, and colon, as well as in lung, placenta, kidney, muscle, and heart. Extremely low expression, if any, in brain, in thymus, bone marrow, and blood leukocytes. Detected in T-cells.

It is found in the endoplasmic reticulum. The protein resides in the golgi apparatus. Its subcellular location is the mitochondrion. The protein localises to the cytoplasm. It localises to the cytosol. Exerts an anti-apoptotic effect in the immune system and is involved in responses to infections. This chain is GTPase IMAP family member 8 (GIMAP8), found in Homo sapiens (Human).